A 267-amino-acid polypeptide reads, in one-letter code: 14-3-3-like protein GF14 chi (267 aa).

The residue at position 2 (A2) is an N-acetylalanine. S72 and S195 each carry phosphoserine. Residue T216 is modified to Phosphothreonine. Residue S267 is modified to Phosphoserine.

Belongs to the 14-3-3 family. As to quaternary structure, interacts with TPK1. Interacts with the isocitrate dehydrogenase IDH3, and malate dehydrogenases MDH1 and MDH2. Interacts with DREB1A and DREB1B in the nucleus. Interacts with CINV1.

The protein resides in the nucleus. The protein localises to the cytoplasm. Its function is as follows. Is associated with a DNA binding complex that binds to the G box, a well-characterized cis-acting DNA regulatory element found in plant genes. Involved in the regulation of nutrient metabolism. The chain is 14-3-3-like protein GF14 chi (GRF1) from Arabidopsis thaliana (Mouse-ear cress).